A 505-amino-acid chain; its full sequence is Folate transporter 1 (505 aa).

A run of 4 helical transmembrane segments spans residues 58-78 (SLIA…IYLL), 89-109 (LSIV…WAVI), 122-142 (YYLL…GLIT), and 146-166 (LFIT…CNVI). N-linked (GlcNAc...) asparagine glycosylation is found at asparagine 177, asparagine 181, and asparagine 186. Helical transmembrane passes span 192-212 (AFRK…LLLI) and 216-236 (HIFL…FFII). Asparagine 240 carries an N-linked (GlcNAc...) asparagine glycan. 5 helical membrane passes run 266 to 286 (IIFI…FFYI), 300 to 320 (MAMF…LFFT), 326 to 346 (KLLL…LVVI), 352 to 372 (FLFI…EFIA), and 405 to 425 (FASI…NITS). N-linked (GlcNAc...) asparagine glycosylation occurs at asparagine 427. The helical transmembrane segment at 431–451 (LPYMIIICCLTNIIPIFFLYI) threads the bilayer. A glycan (N-linked (GlcNAc...) asparagine) is linked at asparagine 454.

The protein belongs to the major facilitator superfamily. Folate-biopterin transporter (TC 2.A.71) family.

The protein resides in the cell membrane. The enzyme catalyses folate(in) + H(+)(in) = folate(out) + H(+)(out). With respect to regulation, transport of folates is inhibited by probenecid and methotrexate. Functionally, folate transporter with broad substrate specificity. Transports folic acid, folinic acid, pteroic acid, dihydropteroic acid, the folate precursor p-amino benzoic acid (pABA) and the human folate catabolite pABA monoglutamate. The polypeptide is Folate transporter 1 (Plasmodium falciparum (isolate 3D7)).